The sequence spans 108 residues: UPF0145 protein Tery_3795 (108 aa).

This sequence belongs to the UPF0145 family.

This Trichodesmium erythraeum (strain IMS101) protein is UPF0145 protein Tery_3795.